We begin with the raw amino-acid sequence, 347 residues long: tRNA N6-adenosine threonylcarbamoyltransferase (347 aa).

Positions 115 and 119 each coordinate Fe cation. Substrate is bound by residues 138-142 (LVSGG), aspartate 171, glycine 184, and asparagine 277. Residue aspartate 305 participates in Fe cation binding.

This sequence belongs to the KAE1 / TsaD family. Requires Fe(2+) as cofactor.

Its subcellular location is the cytoplasm. The enzyme catalyses L-threonylcarbamoyladenylate + adenosine(37) in tRNA = N(6)-L-threonylcarbamoyladenosine(37) in tRNA + AMP + H(+). In terms of biological role, required for the formation of a threonylcarbamoyl group on adenosine at position 37 (t(6)A37) in tRNAs that read codons beginning with adenine. Is involved in the transfer of the threonylcarbamoyl moiety of threonylcarbamoyl-AMP (TC-AMP) to the N6 group of A37, together with TsaE and TsaB. TsaD likely plays a direct catalytic role in this reaction. The chain is tRNA N6-adenosine threonylcarbamoyltransferase from Polaromonas sp. (strain JS666 / ATCC BAA-500).